The chain runs to 340 residues: Armadillo repeat-containing protein 12 (340 aa).

Positions 1–101 (MGKTIPRFLE…NITRCVYLLE (101 aa)) are interaction with TBC1D15. ARM repeat units follow at residues 100–139 (LEAEASSCTMDDIDLVADMLDEKDNSVKIQALNALKAFSG), 179–218 (LPDYVHPQLRRVMPALMEIIQSDCILAQVQAVRLLSYLAQ), and 278–318 (SLHE…SLQC). The tract at residues 321–340 (DLGSRPSSCRPSHSCFKTGK) is disordered. The segment covering 324-340 (SRPSSCRPSHSCFKTGK) has biased composition (low complexity).

As to quaternary structure, interacts with TBC1D15, TBC1D21, GK2 and IMMT. Interacts with VDAC2 and VDAC3 in a TBC1D21-dependent manner. Interacts (via ARM domains) with RBBP4. In terms of tissue distribution, testis-specific.

It is found in the nucleus. The protein localises to the mitochondrion outer membrane. Its function is as follows. Essential for male fertility and sperm mitochondrial sheath formation. Required for proper mitochondrial elongation and coiling along the flagellum during the formation of the mitochondrial sheath. Facilitates the growth and aggressiveness of neuroblastoma cells. Increases the EZH2 activity and H3K27me3 levels in a RBBP4-dependent manner, and facilitates the enrichment of polycomb repressive complex 2 and H3K27me3 on gene promoters, resulting in transcriptional repression of tumor suppressors affecting the proliferation, invasion, and metastasis of tumor cells. This chain is Armadillo repeat-containing protein 12 (Armc12), found in Mus musculus (Mouse).